Here is a 332-residue protein sequence, read N- to C-terminus: Glyceraldehyde-3-phosphate dehydrogenase 1 (332 aa).

NAD(+)-binding positions include 11 to 12, Asp-32, and Arg-77; that span reads RI. D-glyceraldehyde 3-phosphate-binding positions include 148 to 150, Thr-179, 208 to 209, and Arg-231; these read SCT and TG. Cys-149 functions as the Nucleophile in the catalytic mechanism. Residue Asn-313 participates in NAD(+) binding.

This sequence belongs to the glyceraldehyde-3-phosphate dehydrogenase family. Homotetramer.

The protein resides in the cytoplasm. The enzyme catalyses D-glyceraldehyde 3-phosphate + phosphate + NAD(+) = (2R)-3-phospho-glyceroyl phosphate + NADH + H(+). The protein operates within carbohydrate degradation; glycolysis; pyruvate from D-glyceraldehyde 3-phosphate: step 1/5. In Drosophila melanogaster (Fruit fly), this protein is Glyceraldehyde-3-phosphate dehydrogenase 1 (Gapdh1).